The sequence spans 287 residues: Endolytic peptidoglycan transglycosylase RlpA (287 aa).

Positions 1 to 25 (MKLKTGLNLTALLLFMISVAFPAQA) are cleaved as a signal peptide. Positions 209-284 (LKGTEFYCLK…ANNKPLIVYT (76 aa)) constitute an SPOR domain.

Belongs to the RlpA family.

In terms of biological role, lytic transglycosylase with a strong preference for naked glycan strands that lack stem peptides. This Haemophilus influenzae (strain ATCC 51907 / DSM 11121 / KW20 / Rd) protein is Endolytic peptidoglycan transglycosylase RlpA.